Here is a 233-residue protein sequence, read N- to C-terminus: C-type lectin domain family 2 member D6 (233 aa).

Residues 1–45 (MPSSAHLQDSPPLLSRTLTQNEGQTSLRQSSSCGPSATSASESLS) form a disordered region. Residues 1-73 (MPSSAHLQDS…GIILPESPAK (73 aa)) lie on the Cytoplasmic side of the membrane. Positions 16 to 29 (RTLTQNEGQTSLRQ) are enriched in polar residues. Low complexity predominate over residues 30–43 (SSSCGPSATSASES). The chain crosses the membrane as a helical; Signal-anchor for type II membrane protein span at residues 74–94 (LLCCCAVIVVLSVAVVALSVA). Residues 95 to 233 (LSVKKTPQIS…KLNSYTSQCQ (139 aa)) are Extracellular-facing. In terms of domain architecture, C-type lectin spans 119-230 (VGNKCYYFNE…ICSKLNSYTS (112 aa)). A glycan (N-linked (GlcNAc...) asparagine) is linked at N132.

The protein resides in the cell membrane. Functionally, lectin-type cell surface receptor. The sequence is that of C-type lectin domain family 2 member D6 (Clec2d6) from Rattus norvegicus (Rat).